The following is a 384-amino-acid chain: GTPase Obg (384 aa).

Residues 1–159 (MKFVDEVEIR…RPLKLELMLL (159 aa)) form the Obg domain. Positions 72 to 94 (NGMGKNCTGRRGNDIVLPVPPGT) are disordered. In terms of domain architecture, OBG-type G spans 160-333 (ADVGLLGMPN…LCREVMSYLE (174 aa)). GTP contacts are provided by residues 166 to 173 (GMPNAGKS), 191 to 195 (FTTLI), 213 to 216 (DIPG), 283 to 286 (NKVD), and 314 to 316 (AAL). Mg(2+) contacts are provided by Ser-173 and Thr-193. Residues 358–384 (EEVLEEEMDDEDDDDDDDHDVEVIYQK) form a disordered region. Residues 360 to 377 (VLEEEMDDEDDDDDDDHD) show a composition bias toward acidic residues.

The protein belongs to the TRAFAC class OBG-HflX-like GTPase superfamily. OBG GTPase family. In terms of assembly, monomer. Requires Mg(2+) as cofactor.

It localises to the cytoplasm. In terms of biological role, an essential GTPase which binds GTP, GDP and possibly (p)ppGpp with moderate affinity, with high nucleotide exchange rates and a fairly low GTP hydrolysis rate. Plays a role in control of the cell cycle, stress response, ribosome biogenesis and in those bacteria that undergo differentiation, in morphogenesis control. This chain is GTPase Obg, found in Idiomarina loihiensis (strain ATCC BAA-735 / DSM 15497 / L2-TR).